The chain runs to 134 residues: Phosphoribosyl-AMP cyclohydrolase (134 aa).

D80 serves as a coordination point for Mg(2+). C81 is a binding site for Zn(2+). D82 and D84 together coordinate Mg(2+). The Zn(2+) site is built by C98 and C105.

Belongs to the PRA-CH family. As to quaternary structure, homodimer. Mg(2+) serves as cofactor. Zn(2+) is required as a cofactor.

The protein localises to the cytoplasm. The enzyme catalyses 1-(5-phospho-beta-D-ribosyl)-5'-AMP + H2O = 1-(5-phospho-beta-D-ribosyl)-5-[(5-phospho-beta-D-ribosylamino)methylideneamino]imidazole-4-carboxamide. The protein operates within amino-acid biosynthesis; L-histidine biosynthesis; L-histidine from 5-phospho-alpha-D-ribose 1-diphosphate: step 3/9. Catalyzes the hydrolysis of the adenine ring of phosphoribosyl-AMP. This is Phosphoribosyl-AMP cyclohydrolase from Bordetella avium (strain 197N).